Consider the following 244-residue polypeptide: Protein HRI1 (244 aa).

A Phosphoserine modification is found at S143.

Belongs to the HRI1 family. Interacts with HRR25. May interact with SEC72.

It localises to the cytoplasm. It is found in the nucleus. Unknown. Non essential. This chain is Protein HRI1 (HRI1), found in Saccharomyces cerevisiae (strain ATCC 204508 / S288c) (Baker's yeast).